A 419-amino-acid chain; its full sequence is WD repeat-containing protein JIP5 (419 aa).

WD repeat units follow at residues 4–45, 66–105, 108–147, 180–220, 224–263, 268–308, and 351–390; these read ALSS…HNQS, PSHK…VKAR, RAHE…EGDA, DQED…KGVE, DQED…LDHA, GHPS…GIVG, and DAAE…QPPP. The segment at 172 to 192 is disordered; it reads DPPRSKKKDQEDDLKRKRDEE. Positions 372–408 are disordered; sequence SADGSDESAGESDVMQPPPATKRRTAKSKAGKKSVHD. Residues 392 to 404 show a composition bias toward basic residues; the sequence is TKRRTAKSKAGKK.

Belongs to the WD repeat WDR55 family.

It is found in the nucleus. Its subcellular location is the nucleolus. The protein is WD repeat-containing protein JIP5 (JIP5) of Malassezia globosa (strain ATCC MYA-4612 / CBS 7966) (Dandruff-associated fungus).